We begin with the raw amino-acid sequence, 2312 residues long: Protein Ycf2 (2312 aa).

3 disordered regions span residues Ser170–Asp191, Thr223–Asn253, and Lys942–Glu1009. Residues Lys232–Arg242 are compositionally biased toward low complexity. Basic and acidic residues-rich tracts occupy residues Leu243–Asn252 and Lys950–Arg1007. Gly1439–Ser1446 contacts ATP. 3 disordered regions span residues Tyr1513–Gly1532, Leu1857–Pro1983, and Pro2050–Ser2166. Positions Thr1863–Glu1963 are enriched in acidic residues. Residues Gly1964–Arg1976 are compositionally biased toward basic and acidic residues. Acidic residues-rich tracts occupy residues Pro2050–Glu2067 and Gly2074–Ser2149.

Belongs to the Ycf2 family.

It is found in the plastid. Its subcellular location is the chloroplast stroma. Its function is as follows. Probable ATPase of unknown function. Its presence in a non-photosynthetic plant (Epifagus virginiana) and experiments in tobacco indicate that it has an essential function which is probably not related to photosynthesis. The polypeptide is Protein Ycf2 (Oenothera parviflora (Small-flowered evening primrose)).